The chain runs to 294 residues: N-acetylmuramic acid 6-phosphate etherase (294 aa).

Residues 56–219 (TSQALKKGGR…STLSMVSVGK (164 aa)) enclose the SIS domain. E84 acts as the Proton donor in catalysis. E115 is a catalytic residue.

It belongs to the GCKR-like family. MurNAc-6-P etherase subfamily. In terms of assembly, homodimer.

The enzyme catalyses N-acetyl-D-muramate 6-phosphate + H2O = N-acetyl-D-glucosamine 6-phosphate + (R)-lactate. Its pathway is amino-sugar metabolism; 1,6-anhydro-N-acetylmuramate degradation. The protein operates within amino-sugar metabolism; N-acetylmuramate degradation. It functions in the pathway cell wall biogenesis; peptidoglycan recycling. Its function is as follows. Specifically catalyzes the cleavage of the D-lactyl ether substituent of MurNAc 6-phosphate, producing GlcNAc 6-phosphate and D-lactate. Together with AnmK, is also required for the utilization of anhydro-N-acetylmuramic acid (anhMurNAc) either imported from the medium or derived from its own cell wall murein, and thus plays a role in cell wall recycling. The protein is N-acetylmuramic acid 6-phosphate etherase of Francisella philomiragia subsp. philomiragia (strain ATCC 25017 / CCUG 19701 / FSC 153 / O#319-036).